The chain runs to 610 residues: Sulfite reductase [NADPH] flavoprotein alpha-component (610 aa).

Residues 68–206 (IIVISASQTG…EVDKWKEKVV (139 aa)) enclose the Flavodoxin-like domain. FMN-binding positions include 74-79 (SQTGNA), 121-124 (STHG), and 157-166 (LGDRSYEYFA). Residues 243–459 (EFPLIAYLLN…VESNDNFRLP (217 aa)) enclose the FAD-binding FR-type domain. FAD is bound by residues Thr-331, Ser-365, 397–400 (RFYS), 415–417 (TVS), Tyr-421, and 430–433 (GGAS). Residues 530-531 (SR), 536-540 (KVYVQ), and Asp-572 each bind NADP(+). Position 610 (Tyr-610) interacts with FAD.

It belongs to the NADPH-dependent sulphite reductase flavoprotein subunit CysJ family. This sequence in the N-terminal section; belongs to the flavodoxin family. In the C-terminal section; belongs to the flavoprotein pyridine nucleotide cytochrome reductase family. Alpha(8)-beta(8). The alpha component is a flavoprotein, the beta component is a hemoprotein. It depends on FAD as a cofactor. The cofactor is FMN.

It carries out the reaction hydrogen sulfide + 3 NADP(+) + 3 H2O = sulfite + 3 NADPH + 4 H(+). The protein operates within sulfur metabolism; hydrogen sulfide biosynthesis; hydrogen sulfide from sulfite (NADPH route): step 1/1. Component of the sulfite reductase complex that catalyzes the 6-electron reduction of sulfite to sulfide. This is one of several activities required for the biosynthesis of L-cysteine from sulfate. The flavoprotein component catalyzes the electron flow from NADPH -&gt; FAD -&gt; FMN to the hemoprotein component. The sequence is that of Sulfite reductase [NADPH] flavoprotein alpha-component from Blochmanniella floridana.